A 726-amino-acid chain; its full sequence is Probable dipeptidyl-peptidase 5 (726 aa).

An N-terminal signal peptide occupies residues 1–19 (MGALQWLSITAAAASAVSA). N-linked (GlcNAc...) asparagine glycosylation is found at Asn97, Asn153, Asn259, Asn398, Asn453, and Asn529. The Charge relay system role is filled by Ser564. A glycan (N-linked (GlcNAc...) asparagine) is linked at Asn611. Catalysis depends on charge relay system residues Asp647 and His679.

The protein belongs to the peptidase S9C family.

It is found in the secreted. Extracellular dipeptidyl-peptidase which removes N-terminal dipeptides sequentially from polypeptides having unsubstituted N-termini. The polypeptide is Probable dipeptidyl-peptidase 5 (dpp5) (Aspergillus niger).